Consider the following 1165-residue polypeptide: Transient receptor potential cation channel subfamily M member 5 (1165 aa).

Topologically, residues methionine 1–alanine 715 are cytoplasmic. Serine 121 is subject to Phosphoserine. 5 residues coordinate Ca(2+): glutamate 212, cysteine 324, aspartate 333, aspartate 336, and glutamate 337. The helical transmembrane segment at proline 716–leucine 740 threads the bilayer. Topologically, residues aspartate 741–serine 751 are extracellular. A helical transmembrane segment spans residues alanine 752 to glutamine 771. Ca(2+) is bound by residues glutamate 768 and glutamine 771. The Cytoplasmic portion of the chain corresponds to serine 772–asparagine 792. Residues tryptophan 793–arginine 811 form a helical membrane-spanning segment. Residues asparagine 794 and aspartate 797 each coordinate Ca(2+). Topologically, residues methionine 812–glutamate 818 are extracellular. The chain crosses the membrane as a helical span at residues alanine 819–isoleucine 841. Residues histidine 842–isoleucine 850 are Cytoplasmic-facing. A helical membrane pass occupies residues isoleucine 851–leucine 880. Topologically, residues leucine 881–aspartate 889 are extracellular. An intramembrane region (pore-forming) is located at residues tryptophan 890–isoleucine 930. The Selectivity filter signature appears at phenylalanine 904–glutamine 906. The Extracellular segment spans residues leucine 931–alanine 942. The helical transmembrane segment at asparagine 943–glutamine 977 threads the bilayer. At glutamate 978–histidine 1165 the chain is on the cytoplasmic side. Glutamate 994 contributes to the Ca(2+) binding site. Residues arginine 1122–histidine 1165 form a disordered region. Over residues alanine 1132–glutamine 1141 the composition is skewed to polar residues. The span at threonine 1156–histidine 1165 shows a compositional bias: basic and acidic residues.

It belongs to the transient receptor (TC 1.A.4) family. LTrpC subfamily. TRPM5 sub-subfamily. As to quaternary structure, homotetramer.

It localises to the cell membrane. The catalysed reaction is Na(+)(in) = Na(+)(out). It catalyses the reaction K(+)(in) = K(+)(out). Ca(2+)-activated cation channel. Displays voltage dependence modulation. Regulated by PI(4,5)P2 levels. PI(4,5)P 2 reverses the Ca(2+) -induced desensitization of channels. Is highly temperature-sensitive. Its function is as follows. Monovalent cation-selective ion channel activated by intracellular Ca(2+) in a voltage- and temperature-dependent manner. Mediates the transport of Na(+), K(+) and Cs(+) ions equally well. Activated directly by increase in intracellular Ca(2+), but is impermeable to it. The activation mechanism of TRPM5 involves a multistep process. TRPM5 activation involves ligand binding (i.e., tastant molecule, glucose stimulation) to Gq/G-protein coupled receptors (GPCR) and leads to the breakdown of phosphatidylinositol bisphosphate (PIP2) into diacylglycerol (DAG) and inositol trisphosphate (IP3), IP3 binds to its receptors in the endoplasmic reticulum and cause Ca(2+) release. Simultaneously with the intracellular Ca(2+) release, DAG activates the protein kinase C (PKC), which phosphorylates the TRPM5 channel. This phosphorylation combined with the bound Ca(2+), leads to a robust inward current allowing the entry of sodium ions (Na+) into the cell. This ion influx depolarizes the cell membrane, generating action potentials that propagate TRPM5 signals. This Danio rerio (Zebrafish) protein is Transient receptor potential cation channel subfamily M member 5.